Consider the following 370-residue polypeptide: ATP synthase gamma chain, chloroplastic (370 aa).

Residues 1–55 constitute a chloroplast transit peptide; the sequence is MKFFCVAGLLASAAAFQAQPAAFTTYSPAVGGATSNVFSESSSPAHRNRRATIVM. The active site involves cysteine 145.

The protein belongs to the ATPase gamma chain family. F-type ATPases have 2 components, CF(1) - the catalytic core - and CF(0) - the membrane proton channel. CF(1) has five subunits: alpha(3), beta(3), gamma(1), delta(1), epsilon(1). CF(0) has four main subunits: a, b, b' and c.

It is found in the plastid. Its subcellular location is the chloroplast thylakoid membrane. In terms of biological role, produces ATP from ADP in the presence of a proton gradient across the membrane. The gamma chain is believed to be important in regulating ATPase activity and the flow of protons through the CF(0) complex. The chain is ATP synthase gamma chain, chloroplastic (ATPC) from Trieres chinensis (Marine centric diatom).